The primary structure comprises 372 residues: Protein zntB (372 aa).

3 helical membrane-spanning segments follow: residues 15–35, 42–62, and 70–90; these read LIMC…VIFI, LLGH…FMDL, and IGFY…AVIL. The disordered stretch occupies residues 99 to 166; sequence ESGDSNHAHS…IAKSKNKKKS (68 aa). Residues 114-124 show a composition bias toward basic and acidic residues; that stretch reads IEKHSSEKKEV. Residues 133–167 adopt a coiled-coil conformation; it reads NGKDKKQKQQKQKQQKQQQQQKQNIAKSKNKKKSK. A compositionally biased stretch (basic residues) spans 137 to 146; the sequence is KKQKQQKQKQ. A compositionally biased stretch (low complexity) spans 147 to 159; that stretch reads QKQQQQQKQNIAK. A run of 5 helical transmembrane segments spans residues 170-192, 207-229, 237-257, 271-291, and 301-321; these read YLNS…EGVA, LMLA…IFSA, FKYC…FGLI, LAAV…PAAF, and FSNI…HSML. The tract at residues 328–372 is disordered; the sequence is AGDGGHGHSHGGHGHSHGHGHSHGGHSHDSQHVESPQSSSFNAFA. Over residues 334–352 the composition is skewed to basic residues; sequence GHSHGGHGHSHGHGHSHGG. Polar residues predominate over residues 360 to 372; it reads VESPQSSSFNAFA.

It belongs to the ZIP transporter (TC 2.A.5) family. ZupT subfamily.

Its subcellular location is the membrane. May transport divalent cations. May participate, with dstA, in the regulation of the differentiation of stalk cells during development. This chain is Protein zntB (zntB), found in Dictyostelium discoideum (Social amoeba).